The following is a 291-amino-acid chain: Ribonuclease Z (291 aa).

Zn(2+) is bound by residues His-60, His-62, Asp-64, His-65, His-132, Asp-200, and His-256. The active-site Proton acceptor is the Asp-64.

It belongs to the RNase Z family. Homodimer. The cofactor is Zn(2+).

The catalysed reaction is Endonucleolytic cleavage of RNA, removing extra 3' nucleotides from tRNA precursor, generating 3' termini of tRNAs. A 3'-hydroxy group is left at the tRNA terminus and a 5'-phosphoryl group is left at the trailer molecule.. Functionally, zinc phosphodiesterase, which displays some tRNA 3'-processing endonuclease activity. Probably involved in tRNA maturation, by removing a 3'-trailer from precursor tRNA. This is Ribonuclease Z from Metallosphaera sedula (strain ATCC 51363 / DSM 5348 / JCM 9185 / NBRC 15509 / TH2).